A 219-amino-acid polypeptide reads, in one-letter code: Orotate phosphoribosyltransferase (219 aa).

K26 lines the 5-phospho-alpha-D-ribose 1-diphosphate pocket. An orotate-binding site is contributed by 34–35 (FF). 5-phospho-alpha-D-ribose 1-diphosphate is bound by residues 72–73 (YK), R98, K99, K102, H104, and 124–132 (DDVITAGTA). Residues T128 and R156 each contribute to the orotate site.

It belongs to the purine/pyrimidine phosphoribosyltransferase family. PyrE subfamily. Homodimer. Mg(2+) is required as a cofactor.

It carries out the reaction orotidine 5'-phosphate + diphosphate = orotate + 5-phospho-alpha-D-ribose 1-diphosphate. It functions in the pathway pyrimidine metabolism; UMP biosynthesis via de novo pathway; UMP from orotate: step 1/2. Functionally, catalyzes the transfer of a ribosyl phosphate group from 5-phosphoribose 1-diphosphate to orotate, leading to the formation of orotidine monophosphate (OMP). The protein is Orotate phosphoribosyltransferase of Xanthomonas oryzae pv. oryzae (strain MAFF 311018).